The chain runs to 396 residues: Putative peptide chain release factor 1, mitochondrial (396 aa).

Gln-270 bears the N5-methylglutamine mark.

Belongs to the prokaryotic/mitochondrial release factor family. Methylation of glutamine in the GGQ triplet is conserved from bacteria to mammals.

The protein localises to the mitochondrion. The chain is Putative peptide chain release factor 1, mitochondrial from Schizosaccharomyces pombe (strain 972 / ATCC 24843) (Fission yeast).